A 368-amino-acid chain; its full sequence is Spore germination protein B2 (368 aa).

The next 10 helical transmembrane spans lie at 10–30, 43–63, 82–102, 120–140, 145–165, 187–207, 217–237, 282–302, 308–328, and 338–358; these read FMQTLIMISSTLIGAGVLTLP, LMILLQGVIFIIIVLLFLPFL, FIGFLLNLYICLYFIGIVCFQ, MAVVVFIFLAVAIYHVGGGVY, VYAYIFPITLIIFMMLLMFSF, LFPKTLLYFSGFEIIFYLVPF, AVALGIATSTLFYSITLLIVI, FACMLGSFKGAHIGLTEIFHL, AWLLTAMLAATFFITMYPKDL, and LGYAFLIVITIPFFVWFLSWI.

The protein belongs to the amino acid-polyamine-organocation (APC) superfamily. Spore germination protein (SGP) (TC 2.A.3.9) family.

It is found in the cell membrane. Involved in the response to the germinative mixture of L-asparagine, glucose, fructose and potassium ions (AGFK). Could be an amino acid transporter. Cannot stimulate germination in the absence of gerD and gerK gene products (fructose and glucose receptors, respectively). In Bacillus subtilis (strain 168), this protein is Spore germination protein B2 (gerBB).